We begin with the raw amino-acid sequence, 667 residues long: MEDGDEVVEPIEPESEDIVNLTKRLGVDLVLESNDDWKIQEIGFDGVERYLQPETFTDHVGKLARKVEWTKLVGTKSPYENSKVDPEDELDDENVAKGGLNEELVTPEAGPWSSVAKYLHESLNQLNSLLDVISVTKSTDYMKALTVLDPITVQEPTPETISTNRGTQWIWKRRALQEAVQVLDMAQKQRQRASSNLGLSADYMAHLQRTKFFEELREMREIWRVRKVGDYICGDLSYHIFGWKYDTPAIFDISRRSLSNNMENLSIIEVSVPKDLARRSMLAVSIVQDDIQSGNGLFRDPKDKKYTYSYRESDSEKVKLLHWKDSLKWAQNTLLLRDVFKTICTDAIKLRNRLSIIRDNVLLIHLFDDYLLRFELQWFPFQTGEIKEEGDIYLNRVLREMIIGFECTKFIRPQFFCSMPVTHLPEALDLRGCGGFNTAQIEERAVRSRSILQRMLDVASHRALVTMVSDVAERVSRISLDPTVQYRWLNCGRTTSRMMFNMTSKDFEMYIGTISSVRSVFFANISSDGVEVETKDGIKMKCQRDPARVMYACQYAMCCYSVTMVSTMSRNNNWVTPFQTMCANVFALDERGNPAPNIVLCNQAATRSILFVFHVGMEPEVFVRRFIVNEETMKPEEHEWKKLCYSRLHGATLCRKIDALLVFLRDH.

A coiled-coil region spans residues 172 to 197; it reads KRRALQEAVQVLDMAQKQRQRASSNL.

The protein belongs to the Mediator complex subunit 17 family. In terms of assembly, component of the Mediator complex.

It localises to the nucleus. Its function is as follows. Component of the Mediator complex, a coactivator involved in regulated gene transcription of nearly all RNA polymerase II-dependent genes. Mediator functions as a bridge to convey information from gene-specific regulatory proteins to the basal RNA polymerase II transcription machinery. Mediator is recruited to promoters by direct interactions with regulatory proteins and serves as a scaffold for the assembly of a functional preinitiation complex with RNA polymerase II and the general transcription factors. The sequence is that of Mediator of RNA polymerase II transcription subunit 17 (mdt-17) from Caenorhabditis elegans.